We begin with the raw amino-acid sequence, 150 residues long: UPF0178 protein PputW619_5044 (150 aa).

Belongs to the UPF0178 family.

This is UPF0178 protein PputW619_5044 from Pseudomonas putida (strain W619).